Consider the following 479-residue polypeptide: Poly(A) polymerase catalytic subunit (479 aa).

Active-site residues include Asp202 and Asp204. Residues Asp202, Asp204, and Asp253 each coordinate Ca(2+).

It belongs to the poxviridae poly(A) polymerase catalytic subunit family. Heterodimer of a large (catalytic) subunit and a small (regulatory) subunit.

It catalyses the reaction RNA(n) + ATP = RNA(n)-3'-adenine ribonucleotide + diphosphate. In terms of biological role, polymerase that creates the 3'-poly(A) tail of mRNA's. The polypeptide is Poly(A) polymerase catalytic subunit (OPG063) (Bos taurus (Bovine)).